The sequence spans 352 residues: C-C chemokine receptor type 5 (352 aa).

Residues 1–30 lie on the Extracellular side of the membrane; it reads MDYQVSSPTYDIDYNTSEPCQKINVKQIAA. The residue at position 3 (Tyr3) is a Sulfotyrosine. O-linked (GalNAc...) serine glycosylation is found at Ser6 and Ser7. Residues Tyr10 and Tyr14 each carry the sulfotyrosine modification. 2 disulfide bridges follow: Cys20–Cys269 and Cys101–Cys178. A helical membrane pass occupies residues 31 to 58; it reads RLLPLLYSLVFIFGFVGNILVVLILINC. Over 59 to 68 the chain is Cytoplasmic; the sequence is KRLKSMTDIY. A helical transmembrane segment spans residues 69–89; the sequence is LLNLAISDLLFLLTVPFWAHY. The Extracellular portion of the chain corresponds to 90–102; it reads AAAQWDFGNTMCQ. Residues 103 to 124 form a helical membrane-spanning segment; sequence LLTGLYFIGFFSGIFFIILLTI. Residues 125-141 lie on the Cytoplasmic side of the membrane; the sequence is DRYLAIVHAVFALKART. The chain crosses the membrane as a helical span at residues 142-166; the sequence is VTFGVVTSVITWVVAVFASLPRIIF. The Extracellular segment spans residues 167-198; sequence TRSQREGLHYTCSSHFPYSQYQFWKNFQTLKI. The helical transmembrane segment at 199 to 218 threads the bilayer; sequence VILGLVLPLLVMVICYSGIL. At 219–235 the chain is on the cytoplasmic side; it reads KTLLRCRNEKKRHRAVR. The chain crosses the membrane as a helical span at residues 236 to 260; sequence LIFTIMIVYFLFWAPYNIVLLLNTF. Residues 261–277 lie on the Extracellular side of the membrane; that stretch reads QEFFGLNNCSSSNRLDQ. Residues 278–301 traverse the membrane as a helical segment; it reads AMQVTETLGMTHCCINPIIYAFVG. The Cytoplasmic segment spans residues 302–352; that stretch reads EKFRNYLLVFFQKHIAKRFCKCCSIFQQEAPERASSVYTRSTGEQEISVGL. Residues Cys321, Cys323, and Cys324 are each lipidated (S-palmitoyl cysteine). Phosphoserine; by BARK1 occurs at positions 336, 337, 342, and 349.

Belongs to the G-protein coupled receptor 1 family. In terms of assembly, interacts with PRAF2. Efficient ligand binding to CCL3/MIP-1alpha and CCL4/MIP-1beta requires sulfation, O-glycosylation and sialic acid modifications. Glycosylation on Ser-6 is required for efficient binding of CCL4. Interacts with GRK2. Interacts with ARRB1 and ARRB2. Interacts with CNIH4. Interacts with S100A4; this interaction stimulates T-lymphocyte chemotaxis. Post-translationally, sulfated on at least 2 of the N-terminal tyrosines. Sulfation is required for efficient binding of the chemokines, CCL3 and CCL4. Palmitoylation in the C-terminal is important for cell surface expression. In terms of processing, phosphorylation on serine residues in the C-terminal is stimulated by binding CC chemokines especially by APO-RANTES. Post-translationally, O-glycosylated, but not N-glycosylated. Ser-6 appears to be the major site even if Ser-7 may be also O-glycosylated. Also sialylated glycans present which contribute to chemokine binding. Thr-16 and Ser-17 may also be glycosylated and, if so, with small moieties such as a T-antigen.

The protein resides in the cell membrane. Functionally, receptor for a number of inflammatory CC-chemokines including CCL3/MIP-1-alpha, CCL4/MIP-1-beta and RANTES and subsequently transduces a signal by increasing the intracellular calcium ion level. May play a role in the control of granulocytic lineage proliferation or differentiation. Participates in T-lymphocyte migration to the infection site by acting as a chemotactic receptor. The sequence is that of C-C chemokine receptor type 5 (CCR5) from Cercopithecus cephus (Moustached monkey).